We begin with the raw amino-acid sequence, 513 residues long: GMP synthase [glutamine-hydrolyzing] (513 aa).

Residues 3 to 200 (SVLVLDFGSQ…LLNIAGITPD (198 aa)) enclose the Glutamine amidotransferase type-1 domain. The active-site Nucleophile is the cysteine 80. Catalysis depends on residues histidine 174 and glutamate 176. The GMPS ATP-PPase domain maps to 201-388 (WSSKSFIDHQ…LGIAEDILMR (188 aa)). 228–234 (SGGVDST) serves as a coordination point for ATP.

In terms of assembly, homodimer.

The catalysed reaction is XMP + L-glutamine + ATP + H2O = GMP + L-glutamate + AMP + diphosphate + 2 H(+). It functions in the pathway purine metabolism; GMP biosynthesis; GMP from XMP (L-Gln route): step 1/1. Functionally, catalyzes the synthesis of GMP from XMP. The protein is GMP synthase [glutamine-hydrolyzing] of Chlorobium phaeovibrioides (strain DSM 265 / 1930) (Prosthecochloris vibrioformis (strain DSM 265)).